The sequence spans 100 residues: Large ribosomal subunit protein uL23 (100 aa).

Belongs to the universal ribosomal protein uL23 family. In terms of assembly, part of the 50S ribosomal subunit. Contacts protein L29, and trigger factor when it is bound to the ribosome.

Its function is as follows. One of the early assembly proteins it binds 23S rRNA. One of the proteins that surrounds the polypeptide exit tunnel on the outside of the ribosome. Forms the main docking site for trigger factor binding to the ribosome. The polypeptide is Large ribosomal subunit protein uL23 (Prochlorococcus marinus (strain MIT 9215)).